We begin with the raw amino-acid sequence, 437 residues long: Enolase (437 aa).

Gln162 provides a ligand contact to (2R)-2-phosphoglycerate. The active-site Proton donor is the Glu204. Mg(2+) contacts are provided by Asp251, Glu297, and Asp324. Positions 349, 378, 379, and 400 each coordinate (2R)-2-phosphoglycerate. Lys349 (proton acceptor) is an active-site residue.

This sequence belongs to the enolase family. Mg(2+) serves as cofactor.

The protein localises to the cytoplasm. The protein resides in the secreted. It is found in the cell surface. It carries out the reaction (2R)-2-phosphoglycerate = phosphoenolpyruvate + H2O. It participates in carbohydrate degradation; glycolysis; pyruvate from D-glyceraldehyde 3-phosphate: step 4/5. In terms of biological role, catalyzes the reversible conversion of 2-phosphoglycerate (2-PG) into phosphoenolpyruvate (PEP). It is essential for the degradation of carbohydrates via glycolysis. This chain is Enolase, found in Chlorobium phaeovibrioides (strain DSM 265 / 1930) (Prosthecochloris vibrioformis (strain DSM 265)).